The chain runs to 910 residues: Valine--tRNA ligase (910 aa).

A 'HIGH' region motif is present at residues 45–55 (PNVTGSLHMGH). Residues 554–558 (KMSKS) carry the 'KMSKS' region motif. Lys-557 contacts ATP. Positions 842–910 (DLQAEAARLA…TAESRIRDAS (69 aa)) form a coiled coil.

It belongs to the class-I aminoacyl-tRNA synthetase family. ValS type 1 subfamily. Monomer.

The protein resides in the cytoplasm. It catalyses the reaction tRNA(Val) + L-valine + ATP = L-valyl-tRNA(Val) + AMP + diphosphate. In terms of biological role, catalyzes the attachment of valine to tRNA(Val). As ValRS can inadvertently accommodate and process structurally similar amino acids such as threonine, to avoid such errors, it has a 'posttransfer' editing activity that hydrolyzes mischarged Thr-tRNA(Val) in a tRNA-dependent manner. The protein is Valine--tRNA ligase of Brucella melitensis biotype 1 (strain ATCC 23456 / CCUG 17765 / NCTC 10094 / 16M).